We begin with the raw amino-acid sequence, 252 residues long: Electron transfer flavoprotein subunit beta (252 aa).

Belongs to the ETF beta-subunit/FixA family. Heterodimer of an alpha and a beta subunit. Requires AMP as cofactor.

Its subcellular location is the cytoplasm. The protein operates within lipid metabolism; butanoate metabolism. In terms of biological role, part of an electron transfer flavoprotein involved in syntrophic growth of S.wolfei with butyrate. Probably receives electrons from butyryl-CoA dehydrogenases, and transfers them to the membrane-bound quinone oxidoreductase Swol_0698. This chain is Electron transfer flavoprotein subunit beta, found in Syntrophomonas wolfei subsp. wolfei (strain DSM 2245B / Goettingen).